Consider the following 309-residue polypeptide: Dihydroorotate dehydrogenase B (NAD(+)), catalytic subunit (309 aa).

FMN contacts are provided by residues Ser-21 and Lys-45–Ala-46. Substrate contacts are provided by residues Lys-45 and Asn-69 to Leu-73. Residues Asn-99 and Asn-127 each coordinate FMN. A substrate-binding site is contributed by Asn-127. Cys-130 acts as the Nucleophile in catalysis. Lys-165 and Ile-191 together coordinate FMN. Substrate is bound at residue Asn-192 to Thr-193. FMN contacts are provided by residues Gly-217, Gly-243–Gly-244, and Gly-265–Thr-266.

The protein belongs to the dihydroorotate dehydrogenase family. Type 1 subfamily. In terms of assembly, heterotetramer of 2 PyrK and 2 PyrD type B subunits. It depends on FMN as a cofactor.

The protein resides in the cytoplasm. It catalyses the reaction (S)-dihydroorotate + NAD(+) = orotate + NADH + H(+). It participates in pyrimidine metabolism; UMP biosynthesis via de novo pathway; orotate from (S)-dihydroorotate (NAD(+) route): step 1/1. Its function is as follows. Catalyzes the conversion of dihydroorotate to orotate with NAD(+) as electron acceptor. The polypeptide is Dihydroorotate dehydrogenase B (NAD(+)), catalytic subunit (pyrD) (Exiguobacterium sibiricum (strain DSM 17290 / CCUG 55495 / CIP 109462 / JCM 13490 / 255-15)).